The chain runs to 79 residues: Potassium channel toxin Hge-beta-KTx (79 aa).

Residues 1–21 (MAKSFFAAFLIIMLISSLVDG) form the signal peptide. Residues 48-79 (EYMCPVVSSFCKQHCARLGKSGQCDLLECICS) form the BetaSPN-type CS-alpha/beta domain. Intrachain disulfides connect cysteine 51/cysteine 71, cysteine 58/cysteine 76, and cysteine 62/cysteine 78.

Expressed by the venom gland.

It localises to the secreted. The full peptide presents antibacterial and cytotoxic activities. The synthetic C-terminus (AA 33-76) inhibits voltage-gated potassium channels Kv1.1/KCNA1, Kv1.2/KCNA2, and Kv1.3/KCNA3. This Hoffmannihadrurus gertschi (Scorpion) protein is Potassium channel toxin Hge-beta-KTx.